The primary structure comprises 313 residues: Ornithine carbamoyltransferase (313 aa).

Residues 61–64, Q88, R112, and 139–142 contribute to the carbamoyl phosphate site; these read STRT and HPCQ. Residues N170, D228, and 232 to 233 each bind L-ornithine; that span reads SM. Residues 268-269 and R296 contribute to the carbamoyl phosphate site; that span reads CL.

This sequence belongs to the aspartate/ornithine carbamoyltransferase superfamily. OTCase family.

The protein localises to the cytoplasm. The catalysed reaction is carbamoyl phosphate + L-ornithine = L-citrulline + phosphate + H(+). It functions in the pathway amino-acid biosynthesis; L-arginine biosynthesis; L-arginine from L-ornithine and carbamoyl phosphate: step 1/3. Its function is as follows. Reversibly catalyzes the transfer of the carbamoyl group from carbamoyl phosphate (CP) to the N(epsilon) atom of ornithine (ORN) to produce L-citrulline. In Bordetella parapertussis (strain 12822 / ATCC BAA-587 / NCTC 13253), this protein is Ornithine carbamoyltransferase.